Here is an 84-residue protein sequence, read N- to C-terminus: Putative lipoprotein RzoQ (84 aa).

A signal peptide spans 1–22 (MRNRNLLKFLPGLLICLIVLTS). Cys23 carries N-palmitoyl cysteine lipidation. The S-diacylglycerol cysteine moiety is linked to residue Cys23.

The protein localises to the cell membrane. The polypeptide is Putative lipoprotein RzoQ (rzoQ) (Escherichia coli (strain K12)).